The primary structure comprises 1224 residues: Tyrosine-protein kinase abl-1 (1224 aa).

In terms of domain architecture, SH3 spans 115-188 (SSAPLFVALY…PSNFIAPYNS (74 aa)). Residues 194 to 284 (WYHGKISRSD…GLICLLMYPA (91 aa)) enclose the SH2 domain. The region spanning 311–562 (IIMHNKLGGG…PRFRDIHFNL (252 aa)) is the Protein kinase domain. Residues 317 to 325 (LGGGQYGDV), Lys-340, and 385 to 391 (EFMCNGN) contribute to the ATP site. Asp-432 serves as the catalytic Proton acceptor. Positions 450-474 (DFGLARFMKEDTYTAHAGAKFPIKW) match the Kinase activation loop motif. Basic and acidic residues predominate over residues 579–620 (LKKNNDKKLESDKRRSNVRERSDSKSRHSSHHDRDRDRESLH). Disordered regions lie at residues 579 to 671 (LKKN…NTKP), 736 to 775 (KESTDADNEGAGSSSLSRTVSNDSLDTLPLPDSMNSSTYV), 796 to 881 (KRSE…DVGM), 914 to 937 (LRHVPKEESNTSSQEDLPLDATDN), and 968 to 1016 (RPFS…RSNG). Polar residues-rich tracts occupy residues 639 to 655 (SVSFFNPSTTSKVTSFR) and 746 to 760 (AGSSSLSRTVSNDSL). 2 stretches are compositionally biased toward basic and acidic residues: residues 797-819 (RSETPELDHIDSDTADETTKSEK) and 864-877 (PDSKAEDSSDETTK). A compositionally biased stretch (polar residues) spans 973–984 (QCPNNSTSSAIS). Over residues 1001–1016 (YEERMKPELPRKRSNG) the composition is skewed to basic and acidic residues.

The protein belongs to the protein kinase superfamily. Tyr protein kinase family. ABL subfamily. In terms of assembly, interacts (via SH2 and SH3 domains) with mig-13; the interaction is direct. May interact with soem-1.

It is found in the cell membrane. It localises to the cytoplasm. The catalysed reaction is L-tyrosyl-[protein] + ATP = O-phospho-L-tyrosyl-[protein] + ADP + H(+). Functionally, functions downstream of migratory protein mig-13 and is involved in Q neuroblast migration during larval development. Recruited by mig-13 to the leading edge of Q neuroblasts and their descendents to signal downstream, likely to the wve-1 pathway, and direct migration along the anteroposterior body axis. Promotes germline cell apoptosis in response to oxidative, osmotic and heat shock stresses. The polypeptide is Tyrosine-protein kinase abl-1 (abl-1) (Caenorhabditis elegans).